A 438-amino-acid chain; its full sequence is Acid phosphatase type 7 (438 aa).

The N-terminal stretch at 1–23 (MSPFLGGWLFFCMLLPFSPGVQG) is a signal peptide. Asp-141, Asp-170, and Tyr-173 together coordinate Fe cation. Asp-170 is a Zn(2+) binding site. A Zn(2+)-binding site is contributed by Asn-205. N-linked (GlcNAc...) asparagine glycosylation is present at Asn-211. Residues His-286 and His-333 each coordinate Zn(2+). Residue His-335 participates in Fe cation binding. N-linked (GlcNAc...) asparagine glycosylation is found at Asn-350 and Asn-404.

It belongs to the metallophosphoesterase superfamily. Purple acid phosphatase family. Requires Fe cation as cofactor. The cofactor is Zn(2+).

The protein resides in the secreted. The enzyme catalyses a phosphate monoester + H2O = an alcohol + phosphate. This Mus musculus (Mouse) protein is Acid phosphatase type 7.